Here is a 501-residue protein sequence, read N- to C-terminus: Probable sucrose utilization protein SUC1 (501 aa).

The zn(2)-C6 fungal-type DNA-binding region spans 13–39 (CDSCSFRKVKCDMKTPCSRCVLNNLKC).

Belongs to the MAL13 family.

It localises to the nucleus. In terms of biological role, affects sucrose utilization and alpha-glucosidase activity. Probable transcriptional activator. This Candida albicans (strain SC5314 / ATCC MYA-2876) (Yeast) protein is Probable sucrose utilization protein SUC1 (SUC1).